We begin with the raw amino-acid sequence, 586 residues long: Kelch-like protein 7 (586 aa).

In terms of domain architecture, BTB spans 44 to 111 (CDVILTVQER…AYTARISVNS (68 aa)). Residues 146–248 (CLGISVLAEC…SKNFLSKTVQ (103 aa)) enclose the BACK domain. Kelch repeat units follow at residues 294-336 (RIAL…FWDN), 337-382 (VVYI…AAEG), 383-430 (KIYT…EANG), 431-481 (LIYV…FVKD), 483-528 (IFAV…AVGS), and 530-575 (IYVL…CVVD).

Homodimer. Component of the BCR(KLHL7) E3 ubiquitin ligase complex, at least composed of CUL3 and KLHL7 and RBX1.

The protein localises to the nucleus. The protein resides in the cytoplasm. Its pathway is protein modification; protein ubiquitination. Functionally, substrate-specific adapter of a BCR (BTB-CUL3-RBX1) E3 ubiquitin ligase complex. The BCR(KLHL7) complex acts by mediating ubiquitination and subsequent degradation of substrate proteins. Probably mediates 'Lys-48'-linked ubiquitination. This Mus musculus (Mouse) protein is Kelch-like protein 7 (Klhl7).